The primary structure comprises 145 residues: MQRVTLSLDDDLMAEIDAIIRAGNYQNRSEVIRDLARAGLQSMAQAPSPSACCVAALFYVYDHESRELSKRLTRTFHDHHDLSLASLHVHLDHGSCLEVSLLKGAGGEVTRFAERVIAERGVRHGKLVVVPGDEGVAPPHPHSHD.

Positions 77, 88, 90, and 96 each coordinate Ni(2+).

This sequence belongs to the transcriptional regulatory CopG/NikR family. In terms of assembly, homotetramer. Ni(2+) is required as a cofactor.

Transcriptional repressor of the nikABCDE operon. Is active in the presence of excessive concentrations of intracellular nickel. The sequence is that of Nickel-responsive regulator from Edwardsiella ictaluri (strain 93-146).